The primary structure comprises 309 residues: GTP cyclohydrolase MptA (309 aa).

This sequence belongs to the GTP cyclohydrolase IV family. As to quaternary structure, homodimer. Requires Fe(2+) as cofactor.

It catalyses the reaction GTP + H2O = 7,8-dihydroneopterin 2',3'-cyclic phosphate + formate + diphosphate + H(+). Its pathway is cofactor biosynthesis; 5,6,7,8-tetrahydromethanopterin biosynthesis. Functionally, converts GTP to 7,8-dihydro-D-neopterin 2',3'-cyclic phosphate, the first intermediate in the biosynthesis of coenzyme methanopterin. The polypeptide is GTP cyclohydrolase MptA (Haloquadratum walsbyi (strain DSM 16790 / HBSQ001)).